The sequence spans 321 residues: MKKNFYTISKTMSRSLKLILFSVFIGFSIFLIPQPTWAYPFWAQQKFENPREATGKIVCANCHVASMPTRAEVPQAVAADSVFKTVVEIPYKKDLQEIGADGSKVPLQVGAVVMLPDGFKLAPQERWTDEIKEETQGVYFTQYSEEQENIILVGPLPGDQNREIVFPVLSPDPRKDSNYNFGKYSIHVGGNRGRGQVYPTGEKSNNNLFTATNSGTITSIETNEDGTQIINLNNEEGESFTENLPAGTSLLIKEGDTIEKGAKLTEDPNVGGFGQLDKEIVLQSKARVIGMIIFFIGVGLSQIMLVLKKKQVEKVQAAEGI.

A signal peptide spans 1-38 (MKKNFYTISKTMSRSLKLILFSVFIGFSIFLIPQPTWA). Residues Tyr-39, Cys-59, Cys-62, and His-63 each contribute to the heme site. The helical transmembrane segment at 288-308 (VIGMIIFFIGVGLSQIMLVLK) threads the bilayer.

This sequence belongs to the cytochrome f family. As to quaternary structure, the 4 large subunits of the cytochrome b6-f complex are cytochrome b6, subunit IV (17 kDa polypeptide, PetD), cytochrome f and the Rieske protein, while the 4 small subunits are PetG, PetL, PetM and PetN. The complex functions as a dimer. Heme serves as cofactor.

Its subcellular location is the cellular thylakoid membrane. Its function is as follows. Component of the cytochrome b6-f complex, which mediates electron transfer between photosystem II (PSII) and photosystem I (PSI), cyclic electron flow around PSI, and state transitions. This Prochlorococcus marinus (strain NATL1A) protein is Cytochrome f.